We begin with the raw amino-acid sequence, 590 residues long: Arginine--tRNA ligase (590 aa).

Residues 130–140 carry the 'HIGH' region motif; the sequence is PNIAKEMHVGH.

This sequence belongs to the class-I aminoacyl-tRNA synthetase family. As to quaternary structure, monomer.

It localises to the cytoplasm. It catalyses the reaction tRNA(Arg) + L-arginine + ATP = L-arginyl-tRNA(Arg) + AMP + diphosphate. This is Arginine--tRNA ligase from Synechococcus sp. (strain CC9605).